A 448-amino-acid chain; its full sequence is Maintenance of mitochondrial morphology protein 1 (448 aa).

Over 1–74 (MTESVIYSGT…LNHTWSFTQG (74 aa)) the chain is Lumenal. The chain crosses the membrane as a helical span at residues 75-95 (LVVGQLSVIVVVAIFIKFFVF). Residues 96–448 (ADSSATTTTT…IVDKTEEASI (353 aa)) lie on the Cytoplasmic side of the membrane. Disordered stretches follow at residues 119 to 144 (RNKN…LNSP) and 303 to 357 (LQNV…SQED). Over residues 127-140 (SNEDKDPNNNKEDD) the composition is skewed to basic and acidic residues. Residues 164–419 (SPESLDWFNV…EPRFQVVKVP (256 aa)) enclose the SMP-LTD domain. A compositionally biased stretch (low complexity) spans 313-332 (PSNEPNSQNQTQQPTPVNNS). Basic and acidic residues predominate over residues 345-356 (ETKHSKAKRSQE).

The protein belongs to the MMM1 family. Homodimer. Component of the ER-mitochondria encounter structure (ERMES) or MDM complex, composed of MMM1, MDM10, MDM12 and MDM34. An MMM1 homodimer associates with one molecule of MDM12 on each side in a pairwise head-to-tail manner, and the SMP-LTD domains of MMM1 and MDM12 generate a continuous hydrophobic tunnel for phospholipid trafficking.

The protein localises to the endoplasmic reticulum membrane. Component of the ERMES/MDM complex, which serves as a molecular tether to connect the endoplasmic reticulum (ER) and mitochondria. Components of this complex are involved in the control of mitochondrial shape and protein biogenesis, and function in nonvesicular lipid trafficking between the ER and mitochondria. The MDM12-MMM1 subcomplex functions in the major beta-barrel assembly pathway that is responsible for biogenesis of all outer membrane beta-barrel proteins, and acts in a late step after the SAM complex. The MDM10-MDM12-MMM1 subcomplex further acts in the TOM40-specific pathway after the action of the MDM12-MMM1 complex. Essential for establishing and maintaining the structure of mitochondria and maintenance of mtDNA nucleoids. This is Maintenance of mitochondrial morphology protein 1 from Debaryomyces hansenii (strain ATCC 36239 / CBS 767 / BCRC 21394 / JCM 1990 / NBRC 0083 / IGC 2968) (Yeast).